Here is a 122-residue protein sequence, read N- to C-terminus: Large ribosomal subunit protein uL29B (122 aa).

The stretch at 10–69 (QLGIKQIEERAAEIKAELAALRQKKNSGDVGANDIKTAKKNLARALTVRREKILEELVEA) forms a coiled coil.

The protein belongs to the universal ribosomal protein uL29 family. In terms of assembly, component of the large ribosomal subunit.

Its subcellular location is the cytoplasm. The protein is Large ribosomal subunit protein uL29B (RPL35C) of Encephalitozoon cuniculi (strain GB-M1) (Microsporidian parasite).